Reading from the N-terminus, the 132-residue chain is Fatty acid-binding protein, intestinal (132 aa).

Position 2 is an N-acetylalanine (alanine 2). Hexadecanoate is bound by residues tryptophan 83 and arginine 107. Residues tryptophan 83 and arginine 107 each coordinate tetradecanoate.

The protein belongs to the calycin superfamily. Fatty-acid binding protein (FABP) family. Expressed in the small intestine. Expression in the mucosal cells of the ileum extends from the midvillar region to the villus tips.

It localises to the cytoplasm. In terms of biological role, FABPs are thought to play a role in the intracellular transport of long-chain fatty acids and their acyl-CoA esters. FABP2 is probably involved in triglyceride-rich lipoprotein synthesis. Binds saturated long-chain fatty acids with a high affinity, but binds with a lower affinity to unsaturated long-chain fatty acids. FABP2 may also help maintain energy homeostasis by functioning as a lipid sensor. The protein is Fatty acid-binding protein, intestinal (Fabp2) of Rattus norvegicus (Rat).